The chain runs to 94 residues: Small ribosomal subunit protein uS19 (94 aa).

This sequence belongs to the universal ribosomal protein uS19 family.

Protein S19 forms a complex with S13 that binds strongly to the 16S ribosomal RNA. This chain is Small ribosomal subunit protein uS19, found in Endomicrobium trichonymphae.